We begin with the raw amino-acid sequence, 705 residues long: Elongation factor G (705 aa).

Positions 7 to 287 (HLTRNIGIMA…YVCAFLPSPL (281 aa)) constitute a tr-type G domain. Residues 16–23 (AHIDAGKT), 84–88 (DTPGH), and 138–141 (NKMD) each bind GTP. Residues 293-312 (VGTNPTTGAEEDRKPSEDEK) are disordered. Positions 302–312 (EEDRKPSEDEK) are enriched in basic and acidic residues.

It belongs to the TRAFAC class translation factor GTPase superfamily. Classic translation factor GTPase family. EF-G/EF-2 subfamily.

The protein localises to the cytoplasm. In terms of biological role, catalyzes the GTP-dependent ribosomal translocation step during translation elongation. During this step, the ribosome changes from the pre-translocational (PRE) to the post-translocational (POST) state as the newly formed A-site-bound peptidyl-tRNA and P-site-bound deacylated tRNA move to the P and E sites, respectively. Catalyzes the coordinated movement of the two tRNA molecules, the mRNA and conformational changes in the ribosome. This is Elongation factor G from Phocaeicola vulgatus (strain ATCC 8482 / DSM 1447 / JCM 5826 / CCUG 4940 / NBRC 14291 / NCTC 11154) (Bacteroides vulgatus).